The sequence spans 421 residues: Phosphoglycerate kinase (421 aa).

(2R)-3-phosphoglycerate contacts are provided by V23, D24, F25, N26, Q41, R42, S65, H66, G68, R69, L124, R125, H172, and R173. G216 provides a ligand contact to ADP. G216 contacts CDP. K218 lines the AMP pocket. CDP is bound at residue D221. Residue D221 coordinates Mg(2+). Residue K222 coordinates AMP. An ATP-binding site is contributed by K222. G240 contacts ADP. G240 serves as a coordination point for CDP. 2 residues coordinate AMP: G241 and G315. 2 residues coordinate ATP: G241 and G315. CDP is bound by residues G340 and F345. An ADP-binding site is contributed by F345. E346 serves as a coordination point for AMP. ATP contacts are provided by E346, D377, and T378. D377 serves as a coordination point for Mg(2+).

It belongs to the phosphoglycerate kinase family. As to quaternary structure, monomer. The cofactor is Mg(2+).

It localises to the cytoplasm. The protein localises to the mitochondrion. The catalysed reaction is (2R)-3-phosphoglycerate + ATP = (2R)-3-phospho-glyceroyl phosphate + ADP. It participates in carbohydrate degradation; glycolysis; pyruvate from D-glyceraldehyde 3-phosphate: step 2/5. In terms of biological role, catalyzes one of the two ATP producing reactions in the glycolytic pathway via the reversible conversion of 1,3-diphosphoglycerate to 3-phosphoglycerate. Both L- and D- forms of purine and pyrimidine nucleotides can be used as substrates, but the activity is much lower on pyrimidines. Negatively regulates the biosynthesis of acetyl-CoA from pyruvate in the mitochondrion. This Emericella nidulans (strain FGSC A4 / ATCC 38163 / CBS 112.46 / NRRL 194 / M139) (Aspergillus nidulans) protein is Phosphoglycerate kinase (pgkA).